A 74-amino-acid polypeptide reads, in one-letter code: MSKLGVLLTICLLLFPLTALPMDGDEPADRPAERMQDNISSEQHPLFEERHGCCKGPEGCSSRECRPQHCCGRR.

Residues 1 to 19 form the signal peptide; sequence MSKLGVLLTICLLLFPLTA. The propeptide occupies 20 to 74; it reads LPMDGDEPADRPAERMQDNISSEQHPLFEERHGCCKGPEGCSSRECRPQHCCGRR. Cystine bridges form between cysteine 53–cysteine 65, cysteine 54–cysteine 70, and cysteine 60–cysteine 71. Proline 57 carries the 4-hydroxyproline modification. 2 positions are modified to 4-carboxyglutamate: glutamate 58 and glutamate 64. Residue proline 67 is modified to 4-hydroxyproline. Cysteine amide is present on cysteine 71.

This sequence belongs to the conotoxin M superfamily. In terms of tissue distribution, expressed by the venom duct.

The protein localises to the secreted. Its function is as follows. Mu-conotoxins block voltage-gated sodium channels (Nav). In vitro, this synthetic peptide displays a low blocking effect in mouse extensor digitorum longus muscles (IC(50)=616 nM). This Conus tulipa (Fish-hunting cone snail) protein is Mu-conotoxin-like T3.1.